The primary structure comprises 541 residues: Chaperonin GroEL 2 (541 aa).

ATP contacts are provided by residues 29 to 32 (TLGP), 86 to 90 (DGTTT), Gly-413, 476 to 478 (NAA), and Asp-492.

Belongs to the chaperonin (HSP60) family. In terms of assembly, forms a cylinder of 14 subunits composed of two heptameric rings stacked back-to-back. Interacts with the co-chaperonin GroES.

The protein resides in the cytoplasm. It catalyses the reaction ATP + H2O + a folded polypeptide = ADP + phosphate + an unfolded polypeptide.. In terms of biological role, together with its co-chaperonin GroES, plays an essential role in assisting protein folding. The GroEL-GroES system forms a nano-cage that allows encapsulation of the non-native substrate proteins and provides a physical environment optimized to promote and accelerate protein folding. The sequence is that of Chaperonin GroEL 2 from Streptomyces coelicolor (strain ATCC BAA-471 / A3(2) / M145).